The sequence spans 428 residues: Glutamate--tRNA ligase 2 (428 aa).

The 'HIGH' region signature appears at 6–16; sequence PSPTGDMRTEQ.

This sequence belongs to the class-I aminoacyl-tRNA synthetase family. Glutamate--tRNA ligase type 1 subfamily. Monomer.

It is found in the cytoplasm. It catalyses the reaction tRNA(Glu) + L-glutamate + ATP = L-glutamyl-tRNA(Glu) + AMP + diphosphate. Its function is as follows. Catalyzes the attachment of glutamate to tRNA(Glu) in a two-step reaction: glutamate is first activated by ATP to form Glu-AMP and then transferred to the acceptor end of tRNA(Glu). The chain is Glutamate--tRNA ligase 2 from Sulfurovum sp. (strain NBC37-1).